The primary structure comprises 485 residues: N-succinylglutamate 5-semialdehyde dehydrogenase (485 aa).

220–225 contacts NAD(+); sequence GSANTG. Catalysis depends on residues Glu243 and Cys278.

The protein belongs to the aldehyde dehydrogenase family. AstD subfamily.

The catalysed reaction is N-succinyl-L-glutamate 5-semialdehyde + NAD(+) + H2O = N-succinyl-L-glutamate + NADH + 2 H(+). It participates in amino-acid degradation; L-arginine degradation via AST pathway; L-glutamate and succinate from L-arginine: step 4/5. Catalyzes the NAD-dependent reduction of succinylglutamate semialdehyde into succinylglutamate. This is N-succinylglutamate 5-semialdehyde dehydrogenase from Aliivibrio fischeri (strain ATCC 700601 / ES114) (Vibrio fischeri).